Reading from the N-terminus, the 101-residue chain is Urease subunit gamma (101 aa).

It belongs to the urease gamma subunit family. As to quaternary structure, heterotrimer of UreA (gamma), UreB (beta) and UreC (alpha) subunits. Three heterotrimers associate to form the active enzyme.

The protein resides in the cytoplasm. It carries out the reaction urea + 2 H2O + H(+) = hydrogencarbonate + 2 NH4(+). It participates in nitrogen metabolism; urea degradation; CO(2) and NH(3) from urea (urease route): step 1/1. The protein is Urease subunit gamma of Geobacillus kaustophilus (strain HTA426).